The chain runs to 590 residues: Complement component C8 beta chain (590 aa).

A signal peptide spans 1-32; it reads MKKSWTWTWRVPAELLLLCAALGCLCVPGSRS. Positions 33–54 are excised as a propeptide; the sequence is ERPRSLEPTVVNRSLAKSRHSR. An N-linked (GlcNAc...) asparagine glycan is attached at asparagine 44. The region spanning 64-117 is the TSP type-1 1 domain; the sequence is DCELSSWSSWTMCDPCQKKRYRHAYLLRPSQFNGEPCNFSDKEVEDCATSRPCR. Cystine bridges form between cysteine 65/cysteine 100, cysteine 76/cysteine 110, cysteine 79/cysteine 116, cysteine 122/cysteine 133, cysteine 127/cysteine 146, cysteine 140/cysteine 155, and cysteine 162/cysteine 200. 2 C-linked (Man) tryptophan glycosylation sites follow: tryptophan 70 and tryptophan 73. N-linked (GlcNAc...) asparagine glycosylation is present at asparagine 101. Residues 120 to 157 form the LDL-receptor class A domain; the sequence is VRCEGFVCAQTGRCVNRRLLCNGDNDCGDQSDEANCRK. Positions 138, 141, 143, 145, 151, and 152 each coordinate Ca(2+). The MACPF domain occupies 158–504; that stretch reads IYKKCHHEME…EFQGEVSPCR (347 aa). 4 beta stranded membrane passes run 252–259, 262–269, 379–386, and 392–399; these read STFNLGFK, SIFEFGIN, AKNDFKLG, and VYVSLGVS. Cysteines 378 and 403 form a disulfide. Phosphothreonine is present on threonine 418. Disulfide bonds link cysteine 503–cysteine 550, cysteine 505–cysteine 521, cysteine 508–cysteine 523, and cysteine 525–cysteine 534. An EGF-like domain is found at 505-535; that stretch reads CAPCQGNGVPVQKGSRCDCICPVGFQGSACE. In terms of domain architecture, TSP type-1 2 spans 545–588; it reads DGRWSCWSRWSSCSGGQKTRRRQCNNPAPQDGGSPCSGPASETL. 2 C-linked (Man) tryptophan glycosylation sites follow: tryptophan 551 and tryptophan 554. A disulfide bridge links cysteine 557 with cysteine 590. Residues 557–590 form a disordered region; it reads CSGGQKTRRRQCNNPAPQDGGSPCSGPASETLAC.

Belongs to the complement C6/C7/C8/C9 family. As to quaternary structure, heterotrimer of 3 chains: alpha (C8A), beta (C8B) and gamma (C8G); the alpha and gamma chains are disulfide bonded. Component of the membrane attack complex (MAC), composed of complement C5b, C6, C7, C8A, C8B, C8G and multiple copies of the pore-forming subunit C9. Post-translationally, N-glycosylated; contains one or two bound glycans. Not O-glycosylated.

It is found in the secreted. Its subcellular location is the target cell membrane. Membrane attack complex (MAC) assembly is inhibited by CD59, thereby protecting self-cells from damage during complement activation. CD59 acts by binding to the beta-haipins of C8 (C8A and C8B), forming an intermolecular beta-sheet that prevents incorporation of the multiple copies of C9 required for complete formation of the osmolytic pore. MAC assembly is also inhibited by clusterin (CLU) chaperones that inhibit polymerization of C9. Its function is as follows. Component of the membrane attack complex (MAC), a multiprotein complex activated by the complement cascade, which inserts into a target cell membrane and forms a pore, leading to target cell membrane rupture and cell lysis. The MAC is initiated by proteolytic cleavage of C5 into complement C5b in response to the classical, alternative, lectin and GZMK complement pathways. The complement pathways consist in a cascade of proteins that leads to phagocytosis and breakdown of pathogens and signaling that strengthens the adaptive immune system. C8B, together with C8A and C8G, inserts into the target membrane, but does not form pores by itself. During MAC assembly, associates with C5b, C6 and C7 to form the C5b8 intermediate complex that inserts into the target membrane and traverses the bilayer increasing membrane rigidity. This is Complement component C8 beta chain (C8B) from Oryctolagus cuniculus (Rabbit).